Consider the following 193-residue polypeptide: Crossover junction endodeoxyribonuclease RuvC (193 aa).

Residues aspartate 7, glutamate 68, and aspartate 141 contribute to the active site. Mg(2+) contacts are provided by aspartate 7, glutamate 68, and aspartate 141.

It belongs to the RuvC family. In terms of assembly, homodimer which binds Holliday junction (HJ) DNA. The HJ becomes 2-fold symmetrical on binding to RuvC with unstacked arms; it has a different conformation from HJ DNA in complex with RuvA. In the full resolvosome a probable DNA-RuvA(4)-RuvB(12)-RuvC(2) complex forms which resolves the HJ. Mg(2+) serves as cofactor.

It is found in the cytoplasm. It carries out the reaction Endonucleolytic cleavage at a junction such as a reciprocal single-stranded crossover between two homologous DNA duplexes (Holliday junction).. In terms of biological role, the RuvA-RuvB-RuvC complex processes Holliday junction (HJ) DNA during genetic recombination and DNA repair. Endonuclease that resolves HJ intermediates. Cleaves cruciform DNA by making single-stranded nicks across the HJ at symmetrical positions within the homologous arms, yielding a 5'-phosphate and a 3'-hydroxyl group; requires a central core of homology in the junction. The consensus cleavage sequence is 5'-(A/T)TT(C/G)-3'. Cleavage occurs on the 3'-side of the TT dinucleotide at the point of strand exchange. HJ branch migration catalyzed by RuvA-RuvB allows RuvC to scan DNA until it finds its consensus sequence, where it cleaves and resolves the cruciform DNA. This Bifidobacterium adolescentis (strain ATCC 15703 / DSM 20083 / NCTC 11814 / E194a) protein is Crossover junction endodeoxyribonuclease RuvC.